The sequence spans 242 residues: Beta-glucanase (242 aa).

The signal sequence occupies residues 1–28 (MPYLKRVLLLLVTGLFMSLFAVTATASA). Glutamine 29 bears the Pyrrolidone carboxylic acid mark. The GH16 domain occupies 29–242 (QTGGSFFDPF…HYDWVRYTKK (214 aa)). Cysteine 60 and cysteine 89 are oxidised to a cystine. Glutamate 133 (nucleophile) is an active-site residue. Catalysis depends on glutamate 137, which acts as the Proton donor.

Belongs to the glycosyl hydrolase 16 family.

The protein localises to the secreted. The catalysed reaction is Hydrolysis of (1-&gt;4)-beta-D-glucosidic linkages in beta-D-glucans containing (1-&gt;3)- and (1-&gt;4)-bonds.. In Bacillus subtilis (strain 168), this protein is Beta-glucanase (bglS).